A 194-amino-acid chain; its full sequence is Molybdenum cofactor guanylyltransferase (194 aa).

GTP-binding positions include 12-14, Lys-25, Asn-53, Asp-70, and Asp-100; that span reads LAG. Asp-100 is a binding site for Mg(2+).

The protein belongs to the MobA family. Monomer. It depends on Mg(2+) as a cofactor.

It is found in the cytoplasm. The enzyme catalyses Mo-molybdopterin + GTP + H(+) = Mo-molybdopterin guanine dinucleotide + diphosphate. Its function is as follows. Transfers a GMP moiety from GTP to Mo-molybdopterin (Mo-MPT) cofactor (Moco or molybdenum cofactor) to form Mo-molybdopterin guanine dinucleotide (Mo-MGD) cofactor. The protein is Molybdenum cofactor guanylyltransferase of Aliivibrio fischeri (strain ATCC 700601 / ES114) (Vibrio fischeri).